The primary structure comprises 291 residues: N-acetylmannosamine kinase (291 aa).

ATP is bound by residues 5-12 (AIDIGGTK) and 132-139 (GVGGGVVS). 4 residues coordinate Zn(2+): histidine 156, cysteine 166, cysteine 168, and cysteine 173.

It belongs to the ROK (NagC/XylR) family. NanK subfamily. Homodimer.

The enzyme catalyses an N-acyl-D-mannosamine + ATP = an N-acyl-D-mannosamine 6-phosphate + ADP + H(+). It participates in amino-sugar metabolism; N-acetylneuraminate degradation; D-fructose 6-phosphate from N-acetylneuraminate: step 2/5. Catalyzes the phosphorylation of N-acetylmannosamine (ManNAc) to ManNAc-6-P. This is N-acetylmannosamine kinase from Escherichia fergusonii (strain ATCC 35469 / DSM 13698 / CCUG 18766 / IAM 14443 / JCM 21226 / LMG 7866 / NBRC 102419 / NCTC 12128 / CDC 0568-73).